Here is a 194-residue protein sequence, read N- to C-terminus: Cytochrome b-245 light chain (194 aa).

Residues 2 to 7 (GQIEWA) lie on the Cytoplasmic side of the membrane. Residues 8–30 (MWANEQALASGLILVAGGIVATA) form a helical membrane-spanning segment. Topologically, residues 31–35 (GRFTQ) are extracellular. A helical membrane pass occupies residues 36-53 (WYFGTYAIAAGVLVCLLE). At 54–69 (YPRGSRAKGSTLERCG) the chain is on the cytoplasmic side. The stretch at 70–80 (QRYLTAVLKLL) is an intramembrane region. At 81 to 86 (GPLSRN) the chain is on the cytoplasmic side. Residues 87–104 (YYFRAALHLALSVPAGFL) form a helical membrane-spanning segment. Position 105 (L105) is a topological domain, extracellular. The chain crosses the membrane as a helical span at residues 106 to 126 (ATILGTVCLVIASIIYLLAAV). The Cytoplasmic portion of the chain corresponds to 127–194 (RGEQWTPIEP…NPIPVTDEVV (68 aa)). Positions 134–194 (IEPRPKERPQ…NPIPVTDEVV (61 aa)) are disordered. A Phosphothreonine modification is found at T147. Residue K149 forms a Glycyl lysine isopeptide (Lys-Gly) (interchain with G-Cter in ubiquitin) linkage.

The protein belongs to the p22phox family. Component of the phagocyte NADPH oxidase core complex/cytochrome b558 complex, composed of CYBB (heavy chain (beta)) and CYBA (light chain (alpha)). Component of the phagocyte NADPH oxidase complex composed of an obligatory core heterodimer formed by the membrane proteins CYBA and CYBB and the cytosolic regulatory subunits NCF1/p47-phox, NCF2/p67-phox, NCF4/p40-phox and the small GTPase RAC1 or RAC2. Interacts with NCF1 (via SH3 domain). Interacts with SH3PXD2A. Interacts with DUOX1, DUOX2 and TPO. Interacts with NOX4; this interaction mediates superoxide generation. Interacts with calprotectin (S100A8/9). Interacts with GBP7. Interacts with NOXO1. Forms a heterodimer with NOX3 and is essential for activity and cell membrane localization of NOX3. Interacts with NOX1. In terms of processing, phosphorylation at Thr-147 enhances NADPH oxidase activity by promoting NCF1/p47-phox binding. Ubiquitinated at Lys-149 likely by RNF145.

Its subcellular location is the cell membrane. Functionally, subunit of NADPH oxidase complexes that is required for the NADPH oxidase activity that generates, in various cell types, superoxide from molecular oxygen utilizing NADPH as an electron donor. Subunit of the phagocyte NADPH oxidase complex that mediates the transfer of electrons from cytosolic NADPH to O2 to produce the superoxide anion (O2(-)). In the activated complex, electrons are first transferred from NADPH to flavin adenine dinucleotide (FAD) and subsequently transferred via two heme molecules to molecular oxygen, producing superoxide through an outer-sphere reaction. Activation of the NADPH oxidase complex is initiated by the assembly of cytosolic subunits of the NADPH oxidase complex with the core NADPH oxidase complex to form a complex at the plasma membrane or phagosomal membrane. This activation process is initiated by phosphorylation dependent binding of the cytosolic NCF1/p47-phox subunit to the C-terminus of CYBA/p22-phox. Aassociates with NOX3 to form a functional NADPH oxidase constitutively generating superoxide. This Oryctolagus cuniculus (Rabbit) protein is Cytochrome b-245 light chain.